A 146-amino-acid chain; its full sequence is ATP synthase F(0) complex subunit C2, mitochondrial (146 aa).

A mitochondrion-targeting transit peptide spans 1–71; sequence MYACSKFVST…RSFQTSAISR (71 aa). A helical transmembrane segment spans residues 87–107; the sequence is VGVAGSGAGIGTVFGSLIIGY. K114 carries the post-translational modification N6,N6,N6-trimethyllysine. Residues 122 to 142 form a helical membrane-spanning segment; sequence ILGFALSEAMGLFCLMVAFLI.

Belongs to the ATPase C chain family. In terms of assembly, F-type ATPases have 2 components, CF(1) - the catalytic core - and CF(0) - the membrane proton channel. CF(1) has five subunits: alpha(3), beta(3), gamma(1), delta(1), epsilon(1). CF(0) has three main subunits: a, b and c. Interacts with DNAJC30; interaction is direct. Post-translationally, trimethylated by ATPSCKMT at Lys-114. Methylation is required for proper incorporation of the C subunit into the ATP synthase complex and mitochondrial respiration.

It localises to the mitochondrion membrane. Its function is as follows. Mitochondrial membrane ATP synthase (F(1)F(0) ATP synthase or Complex V) produces ATP from ADP in the presence of a proton gradient across the membrane which is generated by electron transport complexes of the respiratory chain. F-type ATPases consist of two structural domains, F(1) - containing the extramembraneous catalytic core and F(0) - containing the membrane proton channel, linked together by a central stalk and a peripheral stalk. During catalysis, ATP synthesis in the catalytic domain of F(1) is coupled via a rotary mechanism of the central stalk subunits to proton translocation. Part of the complex F(0) domain. A homomeric c-ring of probably 10 subunits is part of the complex rotary element. In Mus musculus (Mouse), this protein is ATP synthase F(0) complex subunit C2, mitochondrial.